Reading from the N-terminus, the 265-residue chain is Indole-3-glycerol phosphate synthase (265 aa).

Belongs to the TrpC family.

It carries out the reaction 1-(2-carboxyphenylamino)-1-deoxy-D-ribulose 5-phosphate + H(+) = (1S,2R)-1-C-(indol-3-yl)glycerol 3-phosphate + CO2 + H2O. It functions in the pathway amino-acid biosynthesis; L-tryptophan biosynthesis; L-tryptophan from chorismate: step 4/5. The chain is Indole-3-glycerol phosphate synthase from Xanthomonas campestris pv. campestris (strain 8004).